Here is a 283-residue protein sequence, read N- to C-terminus: Putative sugar uptake protein BC_0219 (283 aa).

The next 10 membrane-spanning stretches (helical) occupy residues 4–21 (LLAL…LVSV), 26–48 (GAYS…MYVF), 52–71 (ALTM…WALG), 84–106 (VSTT…GVIA), 110–132 (WTTT…GVVF), 151–173 (LLTL…WYNI), 178–195 (AILP…VLTS), 208–230 (ALSG…RVGV), 234–253 (FPLS…VFLG), and 260–279 (QLIF…VLLG).

The protein belongs to the GRP transporter (TC 2.A.7.5) family.

The protein localises to the cell membrane. This chain is Putative sugar uptake protein BC_0219, found in Bacillus cereus (strain ATCC 14579 / DSM 31 / CCUG 7414 / JCM 2152 / NBRC 15305 / NCIMB 9373 / NCTC 2599 / NRRL B-3711).